Reading from the N-terminus, the 412-residue chain is Argininosuccinate synthase (412 aa).

ATP is bound by residues 20–28 (AYSGGLDTS) and Ala48. Residues Tyr100 and Ser105 each coordinate L-citrulline. Gly130 lines the ATP pocket. L-aspartate-binding residues include Thr132, Asn136, and Asp137. Asn136 lines the L-citrulline pocket. Residues Arg140, Ser189, Ser198, Glu274, and Tyr286 each coordinate L-citrulline.

It belongs to the argininosuccinate synthase family. Type 1 subfamily. In terms of assembly, homotetramer.

Its subcellular location is the cytoplasm. It carries out the reaction L-citrulline + L-aspartate + ATP = 2-(N(omega)-L-arginino)succinate + AMP + diphosphate + H(+). The protein operates within amino-acid biosynthesis; L-arginine biosynthesis; L-arginine from L-ornithine and carbamoyl phosphate: step 2/3. The protein is Argininosuccinate synthase of Shewanella halifaxensis (strain HAW-EB4).